The sequence spans 704 residues: Structure-specific endonuclease subunit SLX1 homolog (704 aa).

The region spanning 4–90 is the GIY-YIG domain; that stretch reads RFHCVYLLTS…TASARLRHTI (87 aa). Disordered stretches follow at residues 157-180, 290-323, and 354-378; these read ESPR…ADGV, ASFA…RVRT, and GAAL…SRPP. Polar residues-rich tracts occupy residues 161–175 and 311–320; these read VGTQ…SLQG and AGSSTPSPQR. Residues 446–526 form an SLX1-type zinc finger; sequence CSLCALPLQP…PSQPCPCPLC (81 aa). Disordered regions lie at residues 601–629 and 650–671; these read VPGA…SSPI and ASLA…GHSN. Residues 650–662 are compositionally biased toward low complexity; that stretch reads ASLAALSPTSASP.

Belongs to the SLX1 family. Forms a heterodimer with a member of the SLX4 family. A divalent metal cation serves as cofactor.

The protein resides in the nucleus. Its function is as follows. Catalytic subunit of a heterodimeric structure-specific endonuclease that resolves DNA secondary structures generated during DNA repair and recombination. Has endonuclease activity towards branched DNA substrates, introducing single-strand cuts in duplex DNA close to junctions with ss-DNA. This Leishmania major protein is Structure-specific endonuclease subunit SLX1 homolog.